Here is a 172-residue protein sequence, read N- to C-terminus: Methylated-DNA--protein-cysteine methyltransferase (172 aa).

Cys142 (nucleophile; methyl group acceptor) is an active-site residue.

This sequence belongs to the MGMT family.

The protein resides in the cytoplasm. The catalysed reaction is a 6-O-methyl-2'-deoxyguanosine in DNA + L-cysteinyl-[protein] = S-methyl-L-cysteinyl-[protein] + a 2'-deoxyguanosine in DNA. It carries out the reaction a 4-O-methyl-thymidine in DNA + L-cysteinyl-[protein] = a thymidine in DNA + S-methyl-L-cysteinyl-[protein]. Involved in the cellular defense against the biological effects of O6-methylguanine (O6-MeG) and O4-methylthymine (O4-MeT) in DNA. Repairs the methylated nucleobase in DNA by stoichiometrically transferring the methyl group to a cysteine residue in the enzyme. This is a suicide reaction: the enzyme is irreversibly inactivated. This chain is Methylated-DNA--protein-cysteine methyltransferase, found in Pyrococcus abyssi (strain GE5 / Orsay).